Here is a 175-residue protein sequence, read N- to C-terminus: Nucleoside triphosphate/diphosphate phosphatase (175 aa).

Arginine 23 serves as the catalytic Proton donor. Mg(2+)-binding residues include asparagine 87, aspartate 103, aspartate 105, aspartate 107, aspartate 120, and glutamate 123.

It belongs to the Ntdp family. Requires Mg(2+) as cofactor.

It catalyses the reaction a ribonucleoside 5'-triphosphate + H2O = a ribonucleoside 5'-diphosphate + phosphate + H(+). The catalysed reaction is a ribonucleoside 5'-diphosphate + H2O = a ribonucleoside 5'-phosphate + phosphate + H(+). Its function is as follows. Has nucleoside phosphatase activity towards nucleoside triphosphates and nucleoside diphosphates. In Oceanobacillus iheyensis (strain DSM 14371 / CIP 107618 / JCM 11309 / KCTC 3954 / HTE831), this protein is Nucleoside triphosphate/diphosphate phosphatase.